The following is a 562-amino-acid chain: Sesquiterpene synthase (562 aa).

Positions 315, 319, and 467 each coordinate Mg(2+). Positions 315 to 319 (DDIYD) match the DDXXD motif motif.

It belongs to the terpene synthase family. Tpsa subfamily. Mg(2+) serves as cofactor. It depends on Mn(2+) as a cofactor.

In terms of biological role, catalyzes the formation of beta-elemol, guaiol and bulnesol. This is Sesquiterpene synthase from Santalum spicatum (Australian sandalwood).